The following is a 172-amino-acid chain: 3-hydroxydecanoyl-[acyl-carrier-protein] dehydratase (172 aa).

His-71 is an active-site residue.

This sequence belongs to the thioester dehydratase family. FabA subfamily. As to quaternary structure, homodimer.

The protein localises to the cytoplasm. It catalyses the reaction a (3R)-hydroxyacyl-[ACP] = a (2E)-enoyl-[ACP] + H2O. It carries out the reaction (3R)-hydroxydecanoyl-[ACP] = (2E)-decenoyl-[ACP] + H2O. The enzyme catalyses (2E)-decenoyl-[ACP] = (3Z)-decenoyl-[ACP]. The protein operates within lipid metabolism; fatty acid biosynthesis. Its function is as follows. Necessary for the introduction of cis unsaturation into fatty acids. Catalyzes the dehydration of (3R)-3-hydroxydecanoyl-ACP to E-(2)-decenoyl-ACP and then its isomerization to Z-(3)-decenoyl-ACP. Can catalyze the dehydratase reaction for beta-hydroxyacyl-ACPs with saturated chain lengths up to 16:0, being most active on intermediate chain length. The sequence is that of 3-hydroxydecanoyl-[acyl-carrier-protein] dehydratase from Serratia proteamaculans (strain 568).